A 249-amino-acid chain; its full sequence is Putative [LysW]-aminoadipate/[LysW]-glutamate kinase (249 aa).

Positions 64 and 166 each coordinate substrate.

This sequence belongs to the acetylglutamate kinase family. LysZ subfamily.

It localises to the cytoplasm. It catalyses the reaction [amino-group carrier protein]-C-terminal-N-(1,4-dicarboxybutan-1-yl)-L-glutamine + ATP = [amino-group carrier protein]-C-terminal-N-(1-carboxy-5-phosphooxy-5-oxopentan-1-yl)-L-glutamine + ADP. The catalysed reaction is [amino-group carrier protein]-C-terminal-gamma-(L-glutamyl)-L-glutamate + ATP = [amino-group carrier protein]-C-terminal-gamma-(5-phospho-L-glutamyl)-L-glutamate + ADP. It functions in the pathway amino-acid biosynthesis; L-lysine biosynthesis via AAA pathway; L-lysine from L-alpha-aminoadipate (Thermus route): step 2/5. It participates in amino-acid biosynthesis; L-arginine biosynthesis. In terms of biological role, involved in both the arginine and lysine biosynthetic pathways. Phosphorylates the LysW-bound precursors glutamate (for arginine biosynthesis), respectively alpha-aminoadipate (for lysine biosynthesis). This is Putative [LysW]-aminoadipate/[LysW]-glutamate kinase from Pyrococcus horikoshii (strain ATCC 700860 / DSM 12428 / JCM 9974 / NBRC 100139 / OT-3).